Reading from the N-terminus, the 223-residue chain is Chalcone--flavanone isomerase (223 aa).

The substrate site is built by Thr50, Asn114, and Thr191.

Belongs to the chalcone isomerase family.

It carries out the reaction a chalcone = a flavanone.. It functions in the pathway secondary metabolite biosynthesis; flavonoid biosynthesis. Functionally, catalyzes the intramolecular cyclization of bicyclic chalcones into tricyclic (S)-flavanones. Responsible for the isomerization of 4,2',4',6'-tetrahydroxychalcone (also termed chalcone) into naringenin. This Pisum sativum (Garden pea) protein is Chalcone--flavanone isomerase (CHI).